Reading from the N-terminus, the 469-residue chain is MKIKTRFAPSPTGYLHVGGARTALYSWLFSRHAGGEFVLRIEDTDLERSTQDAIDAIMDGMNWLNLDWNEGPYFQTKRFDRYNAVIDDMLVQDTAYKCYCSKERLEALREKQMENGEKPRYDGHCRDSQCSHTDDEPHVVRFRNPQEGSVIFDDKIRGPIEFSNQELDDLIIRRTDGSPTYNFCVVVDDWDMEISHVIRGEDHINNTPRQINILKALGAPVPEYAHVSMILGDDGKKLSKRHGAVGVMQYRDDGYLPQALLNYLVRLGWSHGDQEIFSIDEMKEFFTLEAINKSASAFNTEKLQWLNHHYINHMPAEEVAVHLAWHVEQLGIETRNGPELKDIVKLLGERCKTLKEMAESCRYFYEDFSEFDADAAKKHLRPVARQPLEAVRAKLAAITAWTPENVHDAIQGTADELGVGMGKVGMPLRVAVTGAGQSPGMDVTVHAIGQNRSLQRIDLALAYIAGREA.

Residues 9 to 19 carry the 'HIGH' region motif; it reads PSPTGYLHVGG. Zn(2+) is bound by residues C98, C100, C125, and D127. Positions 237 to 241 match the 'KMSKS' region motif; sequence KLSKR. K240 serves as a coordination point for ATP.

It belongs to the class-I aminoacyl-tRNA synthetase family. Glutamate--tRNA ligase type 1 subfamily. In terms of assembly, monomer. It depends on Zn(2+) as a cofactor.

The protein resides in the cytoplasm. It catalyses the reaction tRNA(Glu) + L-glutamate + ATP = L-glutamyl-tRNA(Glu) + AMP + diphosphate. Its function is as follows. Catalyzes the attachment of glutamate to tRNA(Glu) in a two-step reaction: glutamate is first activated by ATP to form Glu-AMP and then transferred to the acceptor end of tRNA(Glu). The protein is Glutamate--tRNA ligase of Serratia proteamaculans (strain 568).